A 1034-amino-acid chain; its full sequence is Receptor-type guanylate cyclase gcy-25 (1034 aa).

Residues 1–16 form the signal peptide; the sequence is MLLLLLLLKISTFVDS. Topologically, residues 17–409 are extracellular; that stretch reads FQIGHLEFEN…YDNNLCSDFH (393 aa). N-linked (GlcNAc...) asparagine glycosylation is found at Asn-28, Asn-224, Asn-301, Asn-308, and Asn-373. A helical membrane pass occupies residues 410 to 430; sequence VFMIAAIVFSILLIPMAIAFY. Residues 431–1034 are Cytoplasmic-facing; sequence LQRKEHLIQQ…DNSKKMFLNV (604 aa). Positions 464-749 constitute a Protein kinase domain; sequence RVSTISTARA…KITDAVNREF (286 aa). ATP contacts are provided by residues 470 to 478 and Lys-497; that span reads TARASYSSI. Residues 758–785 are a coiled coil; the sequence is IDQMIEMIDEYSANLEQIVAERTRELEQ. Positions 821–951 constitute a Guanylate cyclase domain; it reads TLLVVDVCQF…DTVNMACRMA (131 aa).

Belongs to the adenylyl cyclase class-4/guanylyl cyclase family. As to expression, expressed in AQR, PQR and URX sensory neurons.

The protein localises to the cell membrane. It catalyses the reaction GTP = 3',5'-cyclic GMP + diphosphate. Guanylate cyclase involved in the production of the second messenger cGMP. The sequence is that of Receptor-type guanylate cyclase gcy-25 from Caenorhabditis elegans.